A 308-amino-acid chain; its full sequence is Cysteine synthase (308 aa).

N6-(pyridoxal phosphate)lysine is present on K45. Pyridoxal 5'-phosphate is bound by residues N75, 179-183, and S267; that span reads GTGGT.

Belongs to the cysteine synthase/cystathionine beta-synthase family. As to quaternary structure, homodimer. Forms CymR(2):CysK(2) or CymR(4):CysK(4) complexes in the absence of O-acetylserine. Pyridoxal 5'-phosphate is required as a cofactor.

The enzyme catalyses O-acetyl-L-serine + hydrogen sulfide = L-cysteine + acetate. It functions in the pathway amino-acid biosynthesis; L-cysteine biosynthesis; L-cysteine from L-serine: step 2/2. Its function is as follows. Catalyzes the conversion of O-acetylserine to cysteine. Also acts as a sensor of cysteine availability in the signal transduction pathway modulating CymR activity. When cysteine is present, the pool of O-acetylserine (OAS) is low, which leads to the formation of a CymR-CysK complex and transcriptional repression of the CymR regulon occurs. In the absence of cysteine, the OAS pool is high and the CymR-CysK complex is mostly dissociated, leading to a faster dissociation of CymR from its DNA targets and the lifting of CymR-dependent repression. This is Cysteine synthase (cysK) from Bacillus subtilis (strain 168).